A 423-amino-acid chain; its full sequence is Glutamate-1-semialdehyde 2,1-aminomutase (423 aa).

K259 carries the post-translational modification N6-(pyridoxal phosphate)lysine.

It belongs to the class-III pyridoxal-phosphate-dependent aminotransferase family. HemL subfamily. The cofactor is pyridoxal 5'-phosphate.

The protein resides in the cytoplasm. It carries out the reaction (S)-4-amino-5-oxopentanoate = 5-aminolevulinate. The protein operates within porphyrin-containing compound metabolism; protoporphyrin-IX biosynthesis; 5-aminolevulinate from L-glutamyl-tRNA(Glu): step 2/2. In Methanobrevibacter smithii (strain ATCC 35061 / DSM 861 / OCM 144 / PS), this protein is Glutamate-1-semialdehyde 2,1-aminomutase.